The primary structure comprises 345 residues: Phosphoribosylformylglycinamidine cyclo-ligase (345 aa).

The protein belongs to the AIR synthase family.

It is found in the cytoplasm. The catalysed reaction is 2-formamido-N(1)-(5-O-phospho-beta-D-ribosyl)acetamidine + ATP = 5-amino-1-(5-phospho-beta-D-ribosyl)imidazole + ADP + phosphate + H(+). Its pathway is purine metabolism; IMP biosynthesis via de novo pathway; 5-amino-1-(5-phospho-D-ribosyl)imidazole from N(2)-formyl-N(1)-(5-phospho-D-ribosyl)glycinamide: step 2/2. The protein is Phosphoribosylformylglycinamidine cyclo-ligase of Sodalis glossinidius (strain morsitans).